Consider the following 157-residue polypeptide: SsrA-binding protein (157 aa).

The protein belongs to the SmpB family.

It is found in the cytoplasm. Its function is as follows. Required for rescue of stalled ribosomes mediated by trans-translation. Binds to transfer-messenger RNA (tmRNA), required for stable association of tmRNA with ribosomes. tmRNA and SmpB together mimic tRNA shape, replacing the anticodon stem-loop with SmpB. tmRNA is encoded by the ssrA gene; the 2 termini fold to resemble tRNA(Ala) and it encodes a 'tag peptide', a short internal open reading frame. During trans-translation Ala-aminoacylated tmRNA acts like a tRNA, entering the A-site of stalled ribosomes, displacing the stalled mRNA. The ribosome then switches to translate the ORF on the tmRNA; the nascent peptide is terminated with the 'tag peptide' encoded by the tmRNA and targeted for degradation. The ribosome is freed to recommence translation, which seems to be the essential function of trans-translation. In Syntrophomonas wolfei subsp. wolfei (strain DSM 2245B / Goettingen), this protein is SsrA-binding protein.